A 274-amino-acid chain; its full sequence is MQQLQNVIESAFERRADITPANVDTVTREAVNQVIALLDSGALRVAEKIDGQWVTHQWLKKAVLLSFRINDNQVIDGAESRYFDKVPMKFADYDEARFQKEGFRVVPPAAVRQGAFIARNTVLMPSYVNIGAYVDEGTMVDTWATVGSCAQIGKNVHLSGGVGIGGVLEPLQANPTIIEDNCFIGARSEVVEGVIVEEGSVISMGVYLGQSTKIYDRETGEVFYGRVPAGSVVVSGNLPSKDGKYSLYCAVIVKKVDAKTRGKVGINELLRTID.

The protein belongs to the transferase hexapeptide repeat family.

The protein resides in the cytoplasm. The catalysed reaction is (S)-2,3,4,5-tetrahydrodipicolinate + succinyl-CoA + H2O = (S)-2-succinylamino-6-oxoheptanedioate + CoA. Its pathway is amino-acid biosynthesis; L-lysine biosynthesis via DAP pathway; LL-2,6-diaminopimelate from (S)-tetrahydrodipicolinate (succinylase route): step 1/3. This Klebsiella pneumoniae (strain 342) protein is 2,3,4,5-tetrahydropyridine-2,6-dicarboxylate N-succinyltransferase.